The sequence spans 394 residues: MRGQSLLTWVLAAAVTCAQAQDVPPWTEDCRKSTYPPSGPTYRGPVPWHTINLDLPPYKRWHELLAQKAPALRILVNSITSLVNTFVPSGKLMKMVDQKLPGMIGSLPDPFGEEMRGIADVTGIPLGEIISFNIFYELFTMCTSIITEDEKGHLLHGRNMDFGIFLGWNINNNTWVVTEELKPLTVNLDFQRNNKTVFKATSFVGYVGMLTGFKPGLFSLSLNERFSINGGYLGILEWMFGRKDAQWVGFITRSVLENTTSYEEAKNTLTKTKIMAPVYFILGGKKSGEGCVITRERKESLDVYELDPKHGRWYVVQTNYDRWKNTLFIDDRRTPAKKCLNHTTQKNLSFATIYDVLSTKPVLNKLTVFTTLMDVTKGQFESHLRDCPDPCIGW.

Positions 1–18 (MRGQSLLTWVLAAAVTCA) are cleaved as a signal peptide. Cysteines 30 and 339 form a disulfide. C142 serves as the catalytic Nucleophile. N-linked (GlcNAc...) asparagine glycans are attached at residues N172, N194, N258, N341, and N347. C387 and C391 are oxidised to a cystine.

Belongs to the acid ceramidase family. In terms of assembly, heterodimer; disulfide-linked. The heterodimer is composed of the disulfide-linked alpha and beta chains produced by autocatalytic cleavage of the precursor. In terms of processing, N-glycosylated. Post-translationally, proteolytically cleaved into two chains alpha and beta that remain associated via a disulfide bond. Cleavage gives rise to a conformation change that activates the enzyme. The same catalytic Cys residue mediates the autoproteolytic cleavage and subsequent hydrolysis of lipid substrates. The beta chain may undergo an additional C-terminal processing. Widely expressed.

The protein resides in the lysosome. Its subcellular location is the secreted. The catalysed reaction is an N-acylsphing-4-enine + H2O = sphing-4-enine + a fatty acid. It catalyses the reaction N-dodecanoylsphing-4-enine + H2O = dodecanoate + sphing-4-enine. The enzyme catalyses N-(9Z-octadecenoyl)-sphing-4-enine + H2O = sphing-4-enine + (9Z)-octadecenoate. It carries out the reaction N-tetradecanoylsphing-4-enine + H2O = tetradecanoate + sphing-4-enine. The catalysed reaction is N-hexadecanoylsphing-4-enine + H2O = sphing-4-enine + hexadecanoate. It catalyses the reaction N-octadecanoylsphing-4-enine + H2O = sphing-4-enine + octadecanoate. The enzyme catalyses N-dodecanoyl-(4R)-hydroxysphinganine + H2O = (4R)-hydroxysphinganine + dodecanoate. It carries out the reaction N-(dodecanoyl)-sphinganine + H2O = dodecanoate + sphinganine. The catalysed reaction is N-(acetyl)-sphing-4-enine + H2O = sphing-4-enine + acetate. It catalyses the reaction N-(hexanoyl)sphing-4-enine + H2O = hexanoate + sphing-4-enine. The enzyme catalyses N-octanoylsphing-4-enine + H2O = octanoate + sphing-4-enine. It carries out the reaction N-dodecanoylethanolamine + H2O = dodecanoate + ethanolamine. Its pathway is lipid metabolism; sphingolipid metabolism. Lysosomal ceramidase that hydrolyzes sphingolipid ceramides into sphingosine and free fatty acids at acidic pH. Ceramides, sphingosine, and its phosphorylated form sphingosine-1-phosphate are bioactive lipids that mediate cellular signaling pathways regulating several biological processes including cell proliferation, apoptosis and differentiation. Has a higher catalytic efficiency towards C12-ceramides versus other ceramides. Also catalyzes the reverse reaction allowing the synthesis of ceramides from fatty acids and sphingosine. For the reverse synthetic reaction, the natural sphingosine D-erythro isomer is more efficiently utilized as a substrate compared to D-erythro-dihydrosphingosine and D-erythro-phytosphingosine, while the fatty acids with chain lengths of 12 or 14 carbons are the most efficiently used. Also has an N-acylethanolamine hydrolase activity. By regulating the levels of ceramides, sphingosine and sphingosine-1-phosphate in the epidermis, mediates the calcium-induced differentiation of epidermal keratinocytes. Also indirectly regulates tumor necrosis factor/TNF-induced apoptosis. By regulating the intracellular balance between ceramides and sphingosine, in adrenocortical cells, probably also acts as a regulator of steroidogenesis. This chain is Acid ceramidase, found in Mus musculus (Mouse).